The sequence spans 222 residues: UPF0758 protein YicR (222 aa).

In terms of domain architecture, MPN spans 100 to 222 (PLLSPEMTRE…YVSFAERGWI (123 aa)). The Zn(2+) site is built by His171, His173, and Asp184. The JAMM motif motif lies at 171 to 184 (HNHPSGCAEPSKAD).

The protein belongs to the UPF0758 family. YicR subfamily.

The chain is UPF0758 protein YicR from Escherichia coli (strain 55989 / EAEC).